The chain runs to 129 residues: MGDEQLAKAGLFVDDFNRLRLIDPDVAELLQSAQDKSSEFNDQLKNFQTTTGGLIDSIEEFANVVETEKIRAMMVRNTQERDLAEDDPVLLQMTIRELTVEKERLRVELEAVRKIEKEQDECIQMMTEH.

Residues Val-89–Glu-121 adopt a coiled-coil conformation.

In terms of assembly, component of the IFT complex B composed of at least che-2, che-13, dyf-1, dyf-3, dyf-6, dyf-11, dyf-13, ift-20, ift-74, ift-81, ifta-2, osm-1, osm-5 and osm-6.

It is found in the cell projection. The protein resides in the cilium. Functionally, component of the intraflagellar transport (IFT) complex B required for transport of proteins in the motile cilium. Required for ciliary entrance and transport of specific ciliary cargo proteins such as che-3 which are related to motility. This Caenorhabditis elegans protein is Intraflagellar transport protein 20 homolog.